Consider the following 379-residue polypeptide: Dual-specificity RNA methyltransferase RlmN (379 aa).

Catalysis depends on Glu-95, which acts as the Proton acceptor. The Radical SAM core domain maps to 101 to 345 (EETRGTLCVS…TTVRKTRGDD (245 aa)). An intrachain disulfide couples Cys-108 to Cys-350. The [4Fe-4S] cluster site is built by Cys-115, Cys-119, and Cys-122. Residues 176 to 177 (GE), Ser-208, 230 to 232 (SLH), and Asn-307 each bind S-adenosyl-L-methionine. Cys-350 functions as the S-methylcysteine intermediate in the catalytic mechanism.

This sequence belongs to the radical SAM superfamily. RlmN family. [4Fe-4S] cluster serves as cofactor.

It is found in the cytoplasm. It carries out the reaction adenosine(2503) in 23S rRNA + 2 reduced [2Fe-2S]-[ferredoxin] + 2 S-adenosyl-L-methionine = 2-methyladenosine(2503) in 23S rRNA + 5'-deoxyadenosine + L-methionine + 2 oxidized [2Fe-2S]-[ferredoxin] + S-adenosyl-L-homocysteine. The enzyme catalyses adenosine(37) in tRNA + 2 reduced [2Fe-2S]-[ferredoxin] + 2 S-adenosyl-L-methionine = 2-methyladenosine(37) in tRNA + 5'-deoxyadenosine + L-methionine + 2 oxidized [2Fe-2S]-[ferredoxin] + S-adenosyl-L-homocysteine. In terms of biological role, specifically methylates position 2 of adenine 2503 in 23S rRNA and position 2 of adenine 37 in tRNAs. m2A2503 modification seems to play a crucial role in the proofreading step occurring at the peptidyl transferase center and thus would serve to optimize ribosomal fidelity. The sequence is that of Dual-specificity RNA methyltransferase RlmN from Burkholderia ambifaria (strain MC40-6).